The primary structure comprises 565 residues: Sulfite reductase [NADPH] hemoprotein beta-component (565 aa).

[4Fe-4S] cluster-binding residues include Cys-429, Cys-435, Cys-474, and Cys-478. Cys-478 lines the siroheme pocket.

This sequence belongs to the nitrite and sulfite reductase 4Fe-4S domain family. Alpha(8)-beta(8). The alpha component is a flavoprotein, the beta component is a hemoprotein. Siroheme serves as cofactor. [4Fe-4S] cluster is required as a cofactor.

The enzyme catalyses hydrogen sulfide + 3 NADP(+) + 3 H2O = sulfite + 3 NADPH + 4 H(+). It functions in the pathway sulfur metabolism; hydrogen sulfide biosynthesis; hydrogen sulfide from sulfite (NADPH route): step 1/1. In terms of biological role, component of the sulfite reductase complex that catalyzes the 6-electron reduction of sulfite to sulfide. This is one of several activities required for the biosynthesis of L-cysteine from sulfate. This Shewanella pealeana (strain ATCC 700345 / ANG-SQ1) protein is Sulfite reductase [NADPH] hemoprotein beta-component.